Here is a 215-residue protein sequence, read N- to C-terminus: NADH-quinone oxidoreductase subunit C (215 aa).

The protein belongs to the complex I 30 kDa subunit family. NDH-1 is composed of 14 different subunits. Subunits NuoB, C, D, E, F, and G constitute the peripheral sector of the complex.

The protein resides in the cell inner membrane. The catalysed reaction is a quinone + NADH + 5 H(+)(in) = a quinol + NAD(+) + 4 H(+)(out). Functionally, NDH-1 shuttles electrons from NADH, via FMN and iron-sulfur (Fe-S) centers, to quinones in the respiratory chain. The immediate electron acceptor for the enzyme in this species is believed to be ubiquinone. Couples the redox reaction to proton translocation (for every two electrons transferred, four hydrogen ions are translocated across the cytoplasmic membrane), and thus conserves the redox energy in a proton gradient. The polypeptide is NADH-quinone oxidoreductase subunit C (Methylobacterium radiotolerans (strain ATCC 27329 / DSM 1819 / JCM 2831 / NBRC 15690 / NCIMB 10815 / 0-1)).